A 227-amino-acid polypeptide reads, in one-letter code: Ribose-5-phosphate isomerase A (227 aa).

Substrate-binding positions include 30–33 (TGST), 86–89 (DGAD), and 99–102 (KGMG). The active-site Proton acceptor is Glu108. Substrate is bound at residue Lys126.

This sequence belongs to the ribose 5-phosphate isomerase family. In terms of assembly, homodimer.

The enzyme catalyses aldehydo-D-ribose 5-phosphate = D-ribulose 5-phosphate. It participates in carbohydrate degradation; pentose phosphate pathway; D-ribose 5-phosphate from D-ribulose 5-phosphate (non-oxidative stage): step 1/1. Functionally, catalyzes the reversible conversion of ribose-5-phosphate to ribulose 5-phosphate. This chain is Ribose-5-phosphate isomerase A, found in Thermus thermophilus (strain ATCC 27634 / DSM 579 / HB8).